A 311-amino-acid chain; its full sequence is Olfactory receptor 2M4 (311 aa).

Topologically, residues 1–25 (MVWENQTFNSIFILLGIFNHSPTHT) are extracellular. Asn-5 carries N-linked (GlcNAc...) asparagine glycosylation. Residues 26–49 (FLFSLVLGIFSLALMENISMVLLI) traverse the membrane as a helical segment. Residues 50–57 (YIEKQLHT) lie on the Cytoplasmic side of the membrane. Residues 58 to 79 (PMYFLLSQLSLMDLMLICTTLP) traverse the membrane as a helical segment. The Extracellular segment spans residues 80–100 (KMIFSYLSGKKSISLAGCGTQ). Cys-97 and Cys-189 form a disulfide bridge. Residues 101-120 (IFFYVSLLGAECFLLAVMAY) traverse the membrane as a helical segment. Topologically, residues 121–139 (DRYVAICHPLQYTILMNPK) are cytoplasmic. A helical transmembrane segment spans residues 140 to 158 (LCVFMTVASWTLGSLDGII). Residues 159–195 (VLAAVLSFSYCSSLEIHHFFCDVAALLPLSCTETSAF) are Extracellular-facing. The helical transmembrane segment at 196–219 (ERLLVICCVVMLIFPVSVIILSYS) threads the bilayer. Over 220–236 (HVLRAVIHMGSGESRRK) the chain is Cytoplasmic. A helical membrane pass occupies residues 237–259 (AFTTCSSHLSVVGLYYGAAMFMY). The Extracellular segment spans residues 260–272 (MRPASKHTPDQDK). The helical transmembrane segment at 273–292 (MVSAFYTILTPMLNPLIYSL) threads the bilayer. Topologically, residues 293-311 (RNKEVFRALQKVLKKRKLI) are cytoplasmic.

It belongs to the G-protein coupled receptor 1 family.

It is found in the cell membrane. Odorant receptor. The protein is Olfactory receptor 2M4 (OR2M4) of Homo sapiens (Human).